Consider the following 124-residue polypeptide: UPF0102 protein Noca_3248 (124 aa).

The protein belongs to the UPF0102 family.

This chain is UPF0102 protein Noca_3248, found in Nocardioides sp. (strain ATCC BAA-499 / JS614).